Consider the following 186-residue polypeptide: Imidazoleglycerol-phosphate dehydratase (186 aa).

It belongs to the imidazoleglycerol-phosphate dehydratase family.

It is found in the cytoplasm. It catalyses the reaction D-erythro-1-(imidazol-4-yl)glycerol 3-phosphate = 3-(imidazol-4-yl)-2-oxopropyl phosphate + H2O. The protein operates within amino-acid biosynthesis; L-histidine biosynthesis; L-histidine from 5-phospho-alpha-D-ribose 1-diphosphate: step 6/9. The polypeptide is Imidazoleglycerol-phosphate dehydratase (Dictyoglomus thermophilum (strain ATCC 35947 / DSM 3960 / H-6-12)).